The chain runs to 215 residues: Adenylate kinase (215 aa).

10–15 (GSGKGT) is an ATP binding site. Residues 30 to 59 (STGDILREHVRNGTELGKEAKKYMDAGQLV) form an NMP region. Residues Thr31, Arg36, 57-59 (QLV), 85-88 (GYPR), and Gln92 each bind AMP. The LID stretch occupies residues 126–162 (GRRMCKCGRSYHIIFNPPKVPGKCDECGGELYHRDDD). Residue Arg127 participates in ATP binding. Residues Cys130 and Cys132 each coordinate Zn(2+). An ATP-binding site is contributed by 135–136 (SY). Residues Cys149 and Cys152 each contribute to the Zn(2+) site. Positions 159 and 170 each coordinate AMP. Gly198 is a binding site for ATP.

The protein belongs to the adenylate kinase family. In terms of assembly, monomer.

It is found in the cytoplasm. The catalysed reaction is AMP + ATP = 2 ADP. It participates in purine metabolism; AMP biosynthesis via salvage pathway; AMP from ADP: step 1/1. In terms of biological role, catalyzes the reversible transfer of the terminal phosphate group between ATP and AMP. Plays an important role in cellular energy homeostasis and in adenine nucleotide metabolism. In Methanothrix thermoacetophila (strain DSM 6194 / JCM 14653 / NBRC 101360 / PT) (Methanosaeta thermophila), this protein is Adenylate kinase.